A 185-amino-acid polypeptide reads, in one-letter code: Elongation factor P (185 aa).

Belongs to the elongation factor P family.

The protein localises to the cytoplasm. It functions in the pathway protein biosynthesis; polypeptide chain elongation. Functionally, involved in peptide bond synthesis. Stimulates efficient translation and peptide-bond synthesis on native or reconstituted 70S ribosomes in vitro. Probably functions indirectly by altering the affinity of the ribosome for aminoacyl-tRNA, thus increasing their reactivity as acceptors for peptidyl transferase. The sequence is that of Elongation factor P from Deinococcus radiodurans (strain ATCC 13939 / DSM 20539 / JCM 16871 / CCUG 27074 / LMG 4051 / NBRC 15346 / NCIMB 9279 / VKM B-1422 / R1).